The following is a 341-amino-acid chain: Ketol-acid reductoisomerase (NADP(+)) (341 aa).

Residues 2–181 (VKVYYNGDAN…GSARAGVIET (180 aa)) form the KARI N-terminal Rossmann domain. Residues 25–28 (YGSQ), arginine 48, serine 52, and 82–85 (DEHQ) contribute to the NADP(+) site. Residue histidine 107 is part of the active site. Glycine 133 is an NADP(+) binding site. One can recognise a KARI C-terminal knotted domain in the interval 182–327 (TFKEETETDL…RELRKMMPFV (146 aa)). Mg(2+)-binding residues include aspartate 190, glutamate 194, glutamate 226, and glutamate 230. Serine 251 contributes to the substrate binding site.

The protein belongs to the ketol-acid reductoisomerase family. Requires Mg(2+) as cofactor.

The catalysed reaction is (2R)-2,3-dihydroxy-3-methylbutanoate + NADP(+) = (2S)-2-acetolactate + NADPH + H(+). The enzyme catalyses (2R,3R)-2,3-dihydroxy-3-methylpentanoate + NADP(+) = (S)-2-ethyl-2-hydroxy-3-oxobutanoate + NADPH + H(+). It participates in amino-acid biosynthesis; L-isoleucine biosynthesis; L-isoleucine from 2-oxobutanoate: step 2/4. It functions in the pathway amino-acid biosynthesis; L-valine biosynthesis; L-valine from pyruvate: step 2/4. Its function is as follows. Involved in the biosynthesis of branched-chain amino acids (BCAA). Catalyzes an alkyl-migration followed by a ketol-acid reduction of (S)-2-acetolactate (S2AL) to yield (R)-2,3-dihydroxy-isovalerate. In the isomerase reaction, S2AL is rearranged via a Mg-dependent methyl migration to produce 3-hydroxy-3-methyl-2-ketobutyrate (HMKB). In the reductase reaction, this 2-ketoacid undergoes a metal-dependent reduction by NADPH to yield (R)-2,3-dihydroxy-isovalerate. In Anoxybacillus flavithermus (strain DSM 21510 / WK1), this protein is Ketol-acid reductoisomerase (NADP(+)).